The chain runs to 270 residues: 3-phenylpropionate-dihydrodiol/cinnamic acid-dihydrodiol dehydrogenase (270 aa).

10–34 (FITGGGSGLGLALVERFIEEGAQVA) lines the NAD(+) pocket. Serine 143 lines the substrate pocket. Tyrosine 156 acts as the Proton acceptor in catalysis.

It belongs to the short-chain dehydrogenases/reductases (SDR) family.

The catalysed reaction is 3-(cis-5,6-dihydroxycyclohexa-1,3-dien-1-yl)propanoate + NAD(+) = 3-(2,3-dihydroxyphenyl)propanoate + NADH + H(+). The enzyme catalyses (2E)-3-(cis-5,6-dihydroxycyclohexa-1,3-dien-1-yl)prop-2-enoate + NAD(+) = (2E)-3-(2,3-dihydroxyphenyl)prop-2-enoate + NADH + H(+). Its pathway is aromatic compound metabolism; 3-phenylpropanoate degradation. In terms of biological role, converts 3-phenylpropionate-dihydrodiol (PP-dihydrodiol) and cinnamic acid-dihydrodiol (CI-dihydrodiol) into 3-(2,3-dihydroxylphenyl)propanoic acid (DHPP) and 2,3-dihydroxicinnamic acid (DHCI), respectively. The chain is 3-phenylpropionate-dihydrodiol/cinnamic acid-dihydrodiol dehydrogenase from Escherichia coli (strain K12 / MC4100 / BW2952).